The following is a 273-amino-acid chain: Dermonecrotic toxin LapSicTox-alphaIB1bi (273 aa).

The active site involves His5. Residues Glu25 and Asp27 each contribute to the Mg(2+) site. Catalysis depends on His41, which acts as the Nucleophile. Cystine bridges form between Cys45–Cys51 and Cys47–Cys190. Asp85 provides a ligand contact to Mg(2+). N-linked (GlcNAc...) asparagine glycans are attached at residues Asn189 and Asn250.

The protein belongs to the arthropod phospholipase D family. Class II subfamily. The cofactor is Mg(2+). Expressed by the venom gland.

The protein localises to the secreted. The enzyme catalyses an N-(acyl)-sphingosylphosphocholine = an N-(acyl)-sphingosyl-1,3-cyclic phosphate + choline. It catalyses the reaction an N-(acyl)-sphingosylphosphoethanolamine = an N-(acyl)-sphingosyl-1,3-cyclic phosphate + ethanolamine. The catalysed reaction is a 1-acyl-sn-glycero-3-phosphocholine = a 1-acyl-sn-glycero-2,3-cyclic phosphate + choline. It carries out the reaction a 1-acyl-sn-glycero-3-phosphoethanolamine = a 1-acyl-sn-glycero-2,3-cyclic phosphate + ethanolamine. In terms of biological role, dermonecrotic toxins cleave the phosphodiester linkage between the phosphate and headgroup of certain phospholipids (sphingolipid and lysolipid substrates), forming an alcohol (often choline) and a cyclic phosphate. This toxin acts on sphingomyelin (SM). It may also act on ceramide phosphoethanolamine (CPE), lysophosphatidylcholine (LPC) and lysophosphatidylethanolamine (LPE), but not on lysophosphatidylserine (LPS), and lysophosphatidylglycerol (LPG). It acts by transphosphatidylation, releasing exclusively cyclic phosphate products as second products. Induces dermonecrosis, hemolysis, increased vascular permeability, edema, inflammatory response, and platelet aggregation. The polypeptide is Dermonecrotic toxin LapSicTox-alphaIB1bi (Loxosceles apachea (Apache recluse spider)).